Consider the following 47-residue polypeptide: Defensin-like protein 2 (47 aa).

Cystine bridges form between Cys-3–Cys-47, Cys-14–Cys-36, Cys-20–Cys-41, and Cys-24–Cys-43.

Belongs to the DEFL family.

This chain is Defensin-like protein 2, found in Zea mays (Maize).